The chain runs to 873 residues: MYMSTDEIRRAFLAFFESKGHQIVESSSLVPANDPTLLFTNAGMNQFKDTFLGIEKRSYTRATTAQRCVRAGGKHNDLENVGFTARHHTFFEMLGNFSFGDYFKQDAIKYAWEFLTDVLGLPQDRLLVTIYETDDEAFDIWNKEMGIPADRIVRIGDNKGAPYASDNFWQMGDTGPCGPCSEIFYDHGEHIWGGRPGTPEEDGDRFIEIWNNVFMQFNRQADGTMEPLPKPSVDTGMGIERIAAIMQGVHSNYEIDIFQTLIKKSAEVIGYEDLSNQSLRVVADHIRSCAFLIVDGVMPSNEGRGYVLRRIIRRAVRHGNKLGASGAFFYKLVGPLAEIMGTAGDELKKRQALVEKILKIEEDNFGRTLDRGLTILNDALDNLSGKELDGETVFKLYDTYGFPADLTNDVARERDFTIDEEGFNNAMEAQRQRAREAGKFGVDYNESIKVDVNTEFCGYTGTAAQSSIVALYRDGEAVDSILAGEDALIILDNTPFYAESGGQCGDAGVLTAENTVFNVSDTQKFGAAIGHQGSLVQGALNVGDKLEAQVDVVRRTAITLNHSATHLLHSALRNLLGEHVAQKGSLVKPDALRFDFSNLEAVKPEQLREIERVVNEQIRLNHSIDTNIMDIESAKQKGAMALFGEKYDDEVRVLSMGEFSTELCGGIHAKNTGDIGLFKITSEGGIAAGIRRIEAVTGAAAIDALHAQEALLSETASIVKSDAASVATKVSALLAHSKQLEKDIQQLQDKLAAQESAGLLDQAKEINGVKVLITQLDGADNKALRGMLDEIKNKLGSGIVVLGNVSGDKVGLIVGVTKDLTGKVKAGELVNMVAQQVGGKGGGRPDMAQAGGTDAAALPAALESVTPWLTEKL.

Zn(2+)-binding residues include H562, H566, C664, and H668.

Belongs to the class-II aminoacyl-tRNA synthetase family. The cofactor is Zn(2+).

The protein resides in the cytoplasm. The catalysed reaction is tRNA(Ala) + L-alanine + ATP = L-alanyl-tRNA(Ala) + AMP + diphosphate. Functionally, catalyzes the attachment of alanine to tRNA(Ala) in a two-step reaction: alanine is first activated by ATP to form Ala-AMP and then transferred to the acceptor end of tRNA(Ala). Also edits incorrectly charged Ser-tRNA(Ala) and Gly-tRNA(Ala) via its editing domain. This Photobacterium profundum (strain SS9) protein is Alanine--tRNA ligase.